The chain runs to 65 residues: UPF0370 protein Ent638_2968 (65 aa).

A helical membrane pass occupies residues 4 to 24; that stretch reads LSKYWWILVLVFLVGVLLNVI. The segment at 39–65 is disordered; it reads KPELPPHRDFNDKWDDDDNWPKKDQKK. Residues 42–65 are compositionally biased toward basic and acidic residues; that stretch reads LPPHRDFNDKWDDDDNWPKKDQKK.

This sequence belongs to the UPF0370 family.

The protein resides in the cell membrane. This Enterobacter sp. (strain 638) protein is UPF0370 protein Ent638_2968.